We begin with the raw amino-acid sequence, 162 residues long: Ribonuclease H (162 aa).

The 149-residue stretch at 6 to 154 (DMKRVEIFTD…ADRLANQGVE (149 aa)) folds into the RNase H type-1 domain. Mg(2+)-binding residues include Asp-15, Glu-53, Asp-82, and Asp-146.

It belongs to the RNase H family. As to quaternary structure, monomer. Mg(2+) is required as a cofactor.

Its subcellular location is the cytoplasm. The catalysed reaction is Endonucleolytic cleavage to 5'-phosphomonoester.. Functionally, endonuclease that specifically degrades the RNA of RNA-DNA hybrids. In Nitrosomonas eutropha (strain DSM 101675 / C91 / Nm57), this protein is Ribonuclease H.